A 660-amino-acid polypeptide reads, in one-letter code: Threonine--tRNA ligase (660 aa).

The region spanning 1–49 is the TGS domain; sequence MPDSIVHVKKGQRFLDVIKDKNVVAVKIDSVLHDLRDVAERDVDAIPVS. The catalytic stretch occupies residues 225–554; that stretch reads DHRRIIAEMD…LLEHYAGKLP (330 aa). Positions 318, 369, and 531 each coordinate Zn(2+).

This sequence belongs to the class-II aminoacyl-tRNA synthetase family. Homodimer. The cofactor is Zn(2+).

It localises to the cytoplasm. The catalysed reaction is tRNA(Thr) + L-threonine + ATP = L-threonyl-tRNA(Thr) + AMP + diphosphate + H(+). Functionally, catalyzes the attachment of threonine to tRNA(Thr) in a two-step reaction: L-threonine is first activated by ATP to form Thr-AMP and then transferred to the acceptor end of tRNA(Thr). This Thermoplasma acidophilum (strain ATCC 25905 / DSM 1728 / JCM 9062 / NBRC 15155 / AMRC-C165) protein is Threonine--tRNA ligase.